The sequence spans 533 residues: Metallothionein expression activator (533 aa).

C2H2-type zinc fingers lie at residues 443 to 472 (YVCL…SDRP) and 473 to 500 (YRCD…NGRP). The C2H2-type 3; atypical zinc-finger motif lies at 501-524 (YVCECLKRFNRLDALNRHKQRNIC).

It is found in the nucleus. In terms of biological role, regulates the transcription of genes required for cell separation. The polypeptide is Metallothionein expression activator (ace2) (Schizosaccharomyces pombe (strain 972 / ATCC 24843) (Fission yeast)).